The chain runs to 435 residues: Dual specificity protein kinase FUZ7 (435 aa).

The tract at residues 1-61 (MLSSGAGSSI…TIGKSSAVTP (61 aa)) is disordered. Over residues 46–59 (AASNASTIGKSSAV) the composition is skewed to polar residues. Positions 109 to 417 (LKTLSELGAG…PKDLTKHQYV (309 aa)) constitute a Protein kinase domain. ATP contacts are provided by residues 115 to 123 (LGAGNGGTV) and Lys-138. The Proton acceptor role is filled by Asp-231. The tract at residues 307–359 (NEEDDDSDADNNYTNEDLAGTLSPTKPAPMISLGQNEKQRRRKSKPAGVSLEG) is disordered.

The protein belongs to the protein kinase superfamily. STE Ser/Thr protein kinase family. MAP kinase kinase subfamily.

The enzyme catalyses L-seryl-[protein] + ATP = O-phospho-L-seryl-[protein] + ADP + H(+). It catalyses the reaction L-threonyl-[protein] + ATP = O-phospho-L-threonyl-[protein] + ADP + H(+). It carries out the reaction L-tyrosyl-[protein] + ATP = O-phospho-L-tyrosyl-[protein] + ADP + H(+). Functionally, protein kinase that is necessary for a-locus-dependent processes, such as conjugation tube formation, filament formation, and maintenance of filamentous growth, and for a-locus-independent processes, such as tumor induction and teliospore germination. This chain is Dual specificity protein kinase FUZ7 (FUZ7), found in Mycosarcoma maydis (Corn smut fungus).